The chain runs to 345 residues: Dimethyladenosine transferase 1, mitochondrial (345 aa).

Residues 1 to 27 (MAASGKLGTFRLPPLPTIREIIKLFGL) constitute a mitochondrion transit peptide. Residues 35-38 (QNFL), asparagine 36, leucine 38, glycine 63, glutamate 85, aspartate 111, and asparagine 141 each bind S-adenosyl-L-methionine.

Belongs to the class I-like SAM-binding methyltransferase superfamily. rRNA adenine N(6)-methyltransferase family. KsgA subfamily. In terms of assembly, interacts with mitochondrial RNA polymerase POLRMT. Interacts with TFAM.

The protein resides in the mitochondrion. S-adenosyl-L-methionine-dependent methyltransferase which specifically dimethylates mitochondrial 12S rRNA at the conserved stem loop. Also required for basal transcription of mitochondrial DNA, probably via its interaction with POLRMT and TFAM. Stimulates transcription independently of the methyltransferase activity. In Rattus norvegicus (Rat), this protein is Dimethyladenosine transferase 1, mitochondrial (Tfb1m).